A 482-amino-acid polypeptide reads, in one-letter code: Bifunctional protein HldE (482 aa).

Positions 1-322 (MFGLESKSPK…QYIHTQPSNL (322 aa)) are ribokinase. 198 to 201 (NKKE) is an ATP binding site. Asp267 is an active-site residue. The tract at residues 350 to 482 (FTNGCFDILH…IQRSKICKHS (133 aa)) is cytidylyltransferase.

In the N-terminal section; belongs to the carbohydrate kinase PfkB family. This sequence in the C-terminal section; belongs to the cytidylyltransferase family. In terms of assembly, homodimer.

The catalysed reaction is D-glycero-beta-D-manno-heptose 7-phosphate + ATP = D-glycero-beta-D-manno-heptose 1,7-bisphosphate + ADP + H(+). It catalyses the reaction D-glycero-beta-D-manno-heptose 1-phosphate + ATP + H(+) = ADP-D-glycero-beta-D-manno-heptose + diphosphate. It participates in nucleotide-sugar biosynthesis; ADP-L-glycero-beta-D-manno-heptose biosynthesis; ADP-L-glycero-beta-D-manno-heptose from D-glycero-beta-D-manno-heptose 7-phosphate: step 1/4. Its pathway is nucleotide-sugar biosynthesis; ADP-L-glycero-beta-D-manno-heptose biosynthesis; ADP-L-glycero-beta-D-manno-heptose from D-glycero-beta-D-manno-heptose 7-phosphate: step 3/4. The protein operates within bacterial outer membrane biogenesis; LPS core biosynthesis. In terms of biological role, catalyzes the phosphorylation of D-glycero-D-manno-heptose 7-phosphate at the C-1 position to selectively form D-glycero-beta-D-manno-heptose-1,7-bisphosphate. Its function is as follows. Catalyzes the ADP transfer from ATP to D-glycero-beta-D-manno-heptose 1-phosphate, yielding ADP-D-glycero-beta-D-manno-heptose. In Helicobacter hepaticus (strain ATCC 51449 / 3B1), this protein is Bifunctional protein HldE.